The sequence spans 149 residues: Transcriptional repressor NrdR (149 aa).

Residues 3–34 (CPFCFAVDTKVIDSRLVGEGSSVRRRRQCLVC) fold into a zinc finger. An ATP-cone domain is found at 49 to 139 (PRVVKSNDVR…VYRSFEDIKE (91 aa)).

This sequence belongs to the NrdR family. Zn(2+) is required as a cofactor.

Functionally, negatively regulates transcription of bacterial ribonucleotide reductase nrd genes and operons by binding to NrdR-boxes. In Escherichia coli O139:H28 (strain E24377A / ETEC), this protein is Transcriptional repressor NrdR.